Consider the following 106-residue polypeptide: UPF0145 protein (106 aa).

It belongs to the UPF0145 family.

The polypeptide is UPF0145 protein (Listeria grayi (Listeria murrayi)).